A 366-amino-acid polypeptide reads, in one-letter code: MFEINPVKNRIQDLSDRTAVLRGYLFDYDAKKERLEEVNAELEQPDVWNEPERAQALGKERSTLEEIVTTIDQLEQGLEDVSGLLELAVEADDEETFNETIAELEVLDGKLGQLEFRRMFSGEYDRANCYLDLQAGSGGTEAQDWASMLLRMYLRWAESRGFKTEIIEESDGDVAGLKSATVKIIGEYAFGWLRTETGVHRLVRKSPFDSGGRRHTSFSSAFVYPEVDDDIDIEINPADLRIDVYRASGAGGQHVNKTESAVRITHIPTNIVTQCQNDRSQHKNKDQAMKQLKAKLYEFEMQKKNADKQVLEDNKSDIGWGSQIRSYVLDDSRIKDLRTGVETRNTQAVLDGDLDKFIEASLKAGL.

N5-methylglutamine is present on Gln253.

The protein belongs to the prokaryotic/mitochondrial release factor family. Post-translationally, methylated by PrmC. Methylation increases the termination efficiency of RF2.

It is found in the cytoplasm. Functionally, peptide chain release factor 2 directs the termination of translation in response to the peptide chain termination codons UGA and UAA. This Yersinia pseudotuberculosis serotype I (strain IP32953) protein is Peptide chain release factor 2.